A 776-amino-acid polypeptide reads, in one-letter code: DNA ligase (776 aa).

NAD(+) contacts are provided by residues 31-35 (DAEYD) and 80-81 (SL). Catalysis depends on Lys114, which acts as the N6-AMP-lysine intermediate. 4 residues coordinate NAD(+): Arg135, Glu172, Lys288, and Lys312. Positions 406, 409, 436, and 442 each coordinate Zn(2+). In terms of domain architecture, BRCT spans 693–776 (AEGLPLAGQT…TFLAEQGIVV (84 aa)).

It belongs to the NAD-dependent DNA ligase family. LigA subfamily. The cofactor is Mg(2+). It depends on Mn(2+) as a cofactor.

It catalyses the reaction NAD(+) + (deoxyribonucleotide)n-3'-hydroxyl + 5'-phospho-(deoxyribonucleotide)m = (deoxyribonucleotide)n+m + AMP + beta-nicotinamide D-nucleotide.. DNA ligase that catalyzes the formation of phosphodiester linkages between 5'-phosphoryl and 3'-hydroxyl groups in double-stranded DNA using NAD as a coenzyme and as the energy source for the reaction. It is essential for DNA replication and repair of damaged DNA. This is DNA ligase from Pseudomonas putida (strain GB-1).